The chain runs to 667 residues: MAEVPEDYDSGPDEDGEPESERPELHKSYENAERDTMAEADSKLPAEIYHEPQPETEEEDFREGEPKSAKNVQLKPGGTALEGIAKESKRDVPSETEPGIPQEVKSEREMGEFFKDLEAPMDETHESDLEPPEEAKLNVTEDVFLESAMETDPVPPTETMSEVSGATVRERNLELLEEGTELGVPEESLRVQHEETGVEPPEQTQLDFPSEKPGESLEETDLQPPKMTKPDIPEETQRESTEKKRTEPPEQARPEFPEKEPRKSSEEAGLEPPEETQPEVPGEMQRKATEEKGTELPERTKPDLPDHKSRKSTDENVPEPLEEIKLEFPEEESRKPNEETILEQSEMMKPESPEEIRKSNEEKNPQPPEETGLVLPQEINPRVEEKTQTKPTEEKNLELPDETKPRETHVEFPKEDRPEPIKSKYSVGKNELEFREPKKGKWSLSDEFKKEYYALGSIRESEESIGTHYEFSQPLQKSFDVSEVCSYLDPSESLTELNEFVHEKEVVDLSQDLKELVSEDDETQSKQGTELQFEHLNWDPEKVAEWISQLGFPQYKGCFITNFISGRKLIHVNCSNLPQMGITNFEDMKAISRHTRELLEIEEPLFKRSISLPHRDIIGLYLEQKGHTGIKSDALTLSEFVKAAGLQDYAPEITAPEENEELPCTEP.

The segment covering 1 to 18 has biased composition (acidic residues); it reads MAEVPEDYDSGPDEDGEP. 2 disordered regions span residues 1–108 and 147–424; these read MAEV…KSER and SAME…IKSK. Basic and acidic residues-rich tracts occupy residues 19-53, 84-93, 187-196, and 228-266; these read ESER…HEPQ, IAKESKRDVP, ESLRVQHEET, and TKPD…KSSE. Acidic residues predominate over residues 268-277; that stretch reads AGLEPPEETQ. Basic and acidic residues-rich tracts occupy residues 284–314, 322–338, 346–364, and 381–422; these read MQRK…KSTD, EEIK…KPNE, EMMK…EEKN, and PRVE…EPIK. In terms of domain architecture, SAM spans 538–601; sequence WDPEKVAEWI…SRHTRELLEI (64 aa).

This Macaca fascicularis (Crab-eating macaque) protein is Sterile alpha motif domain-containing protein 15 (SAMD15).